Here is a 1534-residue protein sequence, read N- to C-terminus: Alpha-2-macroglobulin homolog (1534 aa).

The N-terminal stretch at 1–38 (MDTQRFQSQFHWHLSFKFSGAIAACLSLSLVGTGLANA) is a signal peptide.

Belongs to the protease inhibitor I39 (alpha-2-macroglobulin) family. Bacterial alpha-2-macroglobulin subfamily.

The chain is Alpha-2-macroglobulin homolog (yfaS) from Escherichia coli O157:H7.